The sequence spans 310 residues: MKTLTRKLSRTAITLVLVILAFIAIFRAWVYYTESPWTRDARFSADVVAIAPDVAGLITHVNVHDNQLVKKDQVLFTIDQPRYQKALAEAEADVAYYQVLAQEKRQEASRRNRLGVQAMSREEIDQANNVLQTVLHQLAKAQATRDLAKLDLERTVIRAPADGWVTNLNVYAGEFITRGSTAVALVKKNSFYVQAYMEETKLEGVRPGYRAEITPLGSNRVLKGTVDSVAAGVTNASSTSDAKGMATIDSNLEWVRLAQRVPVRIRLDEQQGNLWPAGTTATVVITGKQDRDASQDSFFRKLAHRLREFG.

The chain crosses the membrane as a helical span at residues 12–32 (AITLVLVILAFIAIFRAWVYY).

Belongs to the membrane fusion protein (MFP) (TC 8.A.1) family.

It localises to the cell inner membrane. In terms of biological role, forms an efflux pump with AaeB. This chain is p-hydroxybenzoic acid efflux pump subunit AaeA, found in Salmonella schwarzengrund (strain CVM19633).